A 54-amino-acid chain; its full sequence is MPSRLRXTRKLRGHVSHGHGRIGKHRKHPGGRGNAGGMHHHRINFDKYHXGYFG.

Residues 1 to 30 show a composition bias toward basic residues; that stretch reads MPSRLRXTRKLRGHVSHGHGRIGKHRKHPG. Residues 1 to 42 are disordered; it reads MPSRLRXTRKLRGHVSHGHGRIGKHRKHPGGRGNAGGMHHHR. (3S)-3-hydroxyhistidine is present on His-39. An N6-acetyllysine modification is found at Lys-47.

The protein belongs to the universal ribosomal protein uL15 family. Component of the large ribosomal subunit. Hydroxylated on His-39 by MINA.

It is found in the cytoplasm. Its function is as follows. Component of the large ribosomal subunit. The ribosome is a large ribonucleoprotein complex responsible for the synthesis of proteins in the cell. The sequence is that of Large ribosomal subunit protein uL15 (RPL27A) from Sus scrofa (Pig).